A 402-amino-acid polypeptide reads, in one-letter code: MSRVSQARNLGKYFLLIDNMLVVLGFFVVFPLISIRFVDQMGWAAVMVGIALGLRQFIQQGLGIFGGAIADRFGAKPMIVTGMLMRAAGFATMGIAHEPWLLWFSCLLSGLGGTLFDPPRSALVVKLIRPQQRCRFFSLLMMQDSAGAVIGALLGSWLLQYDFRLVCATGAVLFVLCAAFNAWLLPAWKLSTVRTPVREGMTRVMRDKRFVTYVLTLAGYYMLAVQVMLMLPIMVNDVAGAPSAVKWMYAIEACLSLTLLYPIARWSEKHFRLEHRLMAGLLIMSLSMMPVGMVSGLQQLFTLICLFYIGSIIAEPARETLSALLADARARGSYMGFSRLGLAIGGAIGYIGGGWLFDLGKSAHQPELPWMMLGIIGIFTFLALGWQFSQKRATRRLLERDA.

The Cytoplasmic segment spans residues 1–12 (MSRVSQARNLGK). A helical transmembrane segment spans residues 13-33 (YFLLIDNMLVVLGFFVVFPLI). The Periplasmic segment spans residues 34-98 (SIRFVDQMGW…GFATMGIAHE (65 aa)). A helical membrane pass occupies residues 99–116 (PWLLWFSCLLSGLGGTLF). Over 117-138 (DPPRSALVVKLIRPQQRCRFFS) the chain is Cytoplasmic. A helical transmembrane segment spans residues 139–159 (LLMMQDSAGAVIGALLGSWLL). The Periplasmic segment spans residues 160-164 (QYDFR). A helical membrane pass occupies residues 165–185 (LVCATGAVLFVLCAAFNAWLL). At 186-213 (PAWKLSTVRTPVREGMTRVMRDKRFVTY) the chain is on the cytoplasmic side. The chain crosses the membrane as a helical span at residues 214 to 234 (VLTLAGYYMLAVQVMLMLPIM). At 235–243 (VNDVAGAPS) the chain is on the periplasmic side. The helical transmembrane segment at 244-264 (AVKWMYAIEACLSLTLLYPIA) threads the bilayer. Topologically, residues 265–276 (RWSEKHFRLEHR) are cytoplasmic. The chain crosses the membrane as a helical span at residues 277-297 (LMAGLLIMSLSMMPVGMVSGL). At 298–299 (QQ) the chain is on the periplasmic side. A helical membrane pass occupies residues 300-320 (LFTLICLFYIGSIIAEPARET). The Cytoplasmic portion of the chain corresponds to 321 to 339 (LSALLADARARGSYMGFSR). The helical transmembrane segment at 340-360 (LGLAIGGAIGYIGGGWLFDLG) threads the bilayer. Topologically, residues 361–367 (KSAHQPE) are periplasmic. The chain crosses the membrane as a helical span at residues 368 to 388 (LPWMMLGIIGIFTFLALGWQF). Residues 389-402 (SQKRATRRLLERDA) lie on the Cytoplasmic side of the membrane.

The protein belongs to the major facilitator superfamily. DHA1 family. MdtH (TC 2.A.1.2.21) subfamily.

Its subcellular location is the cell inner membrane. This is Multidrug resistance protein MdtH from Shigella sonnei (strain Ss046).